The following is a 367-amino-acid chain: Cyclin-dependent kinase 5 activator 2 (367 aa).

Residues 1-11 (MGTVLSLSPAS) are compositionally biased toward polar residues. 4 disordered regions span residues 1 to 56 (MGTV…RLKR), 72 to 98 (ASAK…LVQQ), 131 to 175 (AAAT…GSPR), and 329 to 367 (GEAA…NLDR). Residue Gly2 is the site of N-myristoyl glycine attachment. Residues 74 to 84 (AKKKKGSKKVT) are compositionally biased toward basic residues. Position 84 is a phosphothreonine (Thr84). A compositionally biased stretch (low complexity) spans 131–148 (AAATCEPPSGGSAAAQPP). Residues 154-171 (KPPPPPPPAPQVAPPVPG) show a composition bias toward pro residues. Low complexity predominate over residues 342–357 (GAPAASSAARDSCAAG).

The protein belongs to the cyclin-dependent kinase 5 activator family. In terms of assembly, heterodimer of a catalytic subunit and a regulatory subunit. Post-translationally, myristoylated. The Gly-2-Ala mutant is absent of the cell periphery, suggesting that a proper myristoylation signal is essential for the proper distribution of CDK5R2 (p39). As to expression, brain and neuron specific.

It localises to the cell membrane. Its function is as follows. Activator of CDK5/TPKII. This Homo sapiens (Human) protein is Cyclin-dependent kinase 5 activator 2 (CDK5R2).